Consider the following 437-residue polypeptide: tRNA-2-methylthio-N(6)-dimethylallyladenosine synthase (437 aa).

The MTTase N-terminal domain maps to 1-115 (MKVYIETMGC…ISQVIHKEKA (115 aa)). [4Fe-4S] cluster-binding residues include Cys10, Cys46, Cys78, Cys148, Cys152, and Cys155. Residues 134–367 (KKAQIRSLLN…QNRHKEILEE (234 aa)) enclose the Radical SAM core domain. The TRAM domain maps to 370-436 (KLEVGKTHVV…KGRLMATTKG (67 aa)).

The protein belongs to the methylthiotransferase family. MiaB subfamily. In terms of assembly, monomer. Requires [4Fe-4S] cluster as cofactor.

The protein localises to the cytoplasm. It catalyses the reaction N(6)-dimethylallyladenosine(37) in tRNA + (sulfur carrier)-SH + AH2 + 2 S-adenosyl-L-methionine = 2-methylsulfanyl-N(6)-dimethylallyladenosine(37) in tRNA + (sulfur carrier)-H + 5'-deoxyadenosine + L-methionine + A + S-adenosyl-L-homocysteine + 2 H(+). Its function is as follows. Catalyzes the methylthiolation of N6-(dimethylallyl)adenosine (i(6)A), leading to the formation of 2-methylthio-N6-(dimethylallyl)adenosine (ms(2)i(6)A) at position 37 in tRNAs that read codons beginning with uridine. The protein is tRNA-2-methylthio-N(6)-dimethylallyladenosine synthase of Helicobacter pylori (strain G27).